The sequence spans 189 residues: Pyridoxal 5'-phosphate synthase subunit PdxT (189 aa).

48 to 50 (GES) lines the L-glutamine pocket. Cysteine 80 functions as the Nucleophile in the catalytic mechanism. Residues arginine 107 and 136–137 (IR) each bind L-glutamine. Residues histidine 172 and glutamate 174 each act as charge relay system in the active site.

It belongs to the glutaminase PdxT/SNO family. In the presence of PdxS, forms a dodecamer of heterodimers. Only shows activity in the heterodimer.

The catalysed reaction is aldehydo-D-ribose 5-phosphate + D-glyceraldehyde 3-phosphate + L-glutamine = pyridoxal 5'-phosphate + L-glutamate + phosphate + 3 H2O + H(+). It carries out the reaction L-glutamine + H2O = L-glutamate + NH4(+). It participates in cofactor biosynthesis; pyridoxal 5'-phosphate biosynthesis. In terms of biological role, catalyzes the hydrolysis of glutamine to glutamate and ammonia as part of the biosynthesis of pyridoxal 5'-phosphate. The resulting ammonia molecule is channeled to the active site of PdxS. This is Pyridoxal 5'-phosphate synthase subunit PdxT from Ruminiclostridium cellulolyticum (strain ATCC 35319 / DSM 5812 / JCM 6584 / H10) (Clostridium cellulolyticum).